The following is a 367-amino-acid chain: Glutamate 5-kinase (367 aa).

Position 10 (K10) interacts with ATP. Positions 50, 137, and 149 each coordinate substrate. Residues 169–170 (TD) and 211–217 (TGGMGTK) contribute to the ATP site. A PUA domain is found at 275–353 (AGELTVDAGA…QQIDAILGYE (79 aa)).

Belongs to the glutamate 5-kinase family.

The protein localises to the cytoplasm. The enzyme catalyses L-glutamate + ATP = L-glutamyl 5-phosphate + ADP. It participates in amino-acid biosynthesis; L-proline biosynthesis; L-glutamate 5-semialdehyde from L-glutamate: step 1/2. Catalyzes the transfer of a phosphate group to glutamate to form L-glutamate 5-phosphate. The sequence is that of Glutamate 5-kinase from Klebsiella pneumoniae (strain 342).